The following is a 185-amino-acid chain: Elongation factor P (185 aa).

The protein belongs to the elongation factor P family.

Its subcellular location is the cytoplasm. Its pathway is protein biosynthesis; polypeptide chain elongation. Functionally, involved in peptide bond synthesis. Stimulates efficient translation and peptide-bond synthesis on native or reconstituted 70S ribosomes in vitro. Probably functions indirectly by altering the affinity of the ribosome for aminoacyl-tRNA, thus increasing their reactivity as acceptors for peptidyl transferase. The protein is Elongation factor P of Thermosipho africanus (strain TCF52B).